The primary structure comprises 266 residues: Ribonuclease 3 (266 aa).

The tract at residues 1-35 (MMDESADIKPVPTSEDVAAPSGTEPVAPAPKKKRA) is disordered. The RNase III domain maps to 43 to 171 (MAAIEQRLGH…VIGAVYLDGG (129 aa)). Glutamate 84 contributes to the Mg(2+) binding site. Residue aspartate 88 is part of the active site. Mg(2+) contacts are provided by aspartate 157 and glutamate 160. Glutamate 160 is a catalytic residue. The 70-residue stretch at 196 to 265 (DPKTVLQEWA…ASAMIVREGV (70 aa)) folds into the DRBM domain.

Belongs to the ribonuclease III family. Homodimer. It depends on Mg(2+) as a cofactor.

The protein resides in the cytoplasm. It carries out the reaction Endonucleolytic cleavage to 5'-phosphomonoester.. In terms of biological role, digests double-stranded RNA. Involved in the processing of primary rRNA transcript to yield the immediate precursors to the large and small rRNAs (23S and 16S). Processes some mRNAs, and tRNAs when they are encoded in the rRNA operon. Processes pre-crRNA and tracrRNA of type II CRISPR loci if present in the organism. The polypeptide is Ribonuclease 3 (Nitrobacter winogradskyi (strain ATCC 25391 / DSM 10237 / CIP 104748 / NCIMB 11846 / Nb-255)).